The chain runs to 28 residues: Conotoxin Cl9b (28 aa).

4-hydroxyproline is present on residues proline 17 and proline 28.

Post-translationally, contains 3 disulfide bonds. As to expression, expressed by the venom duct.

It localises to the secreted. In Californiconus californicus (California cone), this protein is Conotoxin Cl9b.